The chain runs to 147 residues: Probable 4-amino-4-deoxy-L-arabinose-phosphoundecaprenol flippase subunit ArnF (147 aa).

The Cytoplasmic segment spans residues 1–23; sequence MSNDHPQGQLPASPARSALKGYL. The helical transmembrane segment at 24 to 44 threads the bilayer; that stretch reads YVLGSILLVTAAQLGMKWGVI. The Periplasmic portion of the chain corresponds to 45-62; that stretch reads QLPTWQMDLAVMLAHPLP. A helical membrane pass occupies residues 63-83; the sequence is LLVILAGVGCYALSLLCWLAA. The Cytoplasmic portion of the chain corresponds to 84–93; the sequence is LHSTPLNIAY. Residues 94–114 form a helical membrane-spanning segment; it reads PLLSTSYALVYLLAVNIPLFA. At 115–121 the chain is on the periplasmic side; it reads EPLEPGK. A helical transmembrane segment spans residues 122-142; sequence ALGVLFILLGAVLVGIKPAAG. Over 143 to 147 the chain is Cytoplasmic; that stretch reads TKQTG.

The protein belongs to the ArnF family. Heterodimer of ArnE and ArnF.

The protein localises to the cell inner membrane. It participates in bacterial outer membrane biogenesis; lipopolysaccharide biosynthesis. In terms of biological role, translocates 4-amino-4-deoxy-L-arabinose-phosphoundecaprenol (alpha-L-Ara4N-phosphoundecaprenol) from the cytoplasmic to the periplasmic side of the inner membrane. The sequence is that of Probable 4-amino-4-deoxy-L-arabinose-phosphoundecaprenol flippase subunit ArnF from Aeromonas hydrophila subsp. hydrophila (strain ATCC 7966 / DSM 30187 / BCRC 13018 / CCUG 14551 / JCM 1027 / KCTC 2358 / NCIMB 9240 / NCTC 8049).